The following is a 1969-amino-acid chain: Cytadherence high molecular weight protein 1 (1969 aa).

An HAT 1 repeat occupies 148–166 (YYDENEEWVWTGYFDEDNK). The interval 174–244 (KPAEVEALEE…QPESEQEGSG (71 aa)) is disordered. Composition is skewed to acidic residues over residues 179-207 (EALEEESEATEEVVEQEPQEEVQAEEVVE) and 214-242 (QPEEEVAAEEYAEAAQEEYEEQPESEQEG). HAT repeat units follow at residues 258–278 (YYDENNDWVWTGYFDENNNFV), 300–331 (AQQEQVQEEYEQQPEQEGSGEYWEQFVGVEGY), and 333–353 (YYDENNDWVWTGYFDENNNFV). Positions 294-319 (QVEEYSAQQEQVQEEYEQQPEQEGSG) are disordered. Residues 365–393 (VSEEQYSESVSEEQEPASEEQVAEEPAQV) are disordered. Positions 374–387 (VSEEQEPASEEQVA) are enriched in acidic residues. HAT repeat units lie at residues 477–497 (YYDENNEWVWKGYFNEYGMFI) and 959–997 (LTLVEEEPFFNKFIGNEQYGYYNNKNVWIWTGYFDDQNN). Positions 1000-1027 (SDKDSKTQKVDQLIEEFNKQEAIKKTEE) form a coiled coil. The HAT 7 repeat unit spans residues 1029-1067 (EAKKASEPFYNKYIGNKQFGYYNDKNVWIWNGYFDENDQ). 3 coiled-coil regions span residues 1082–1190 (IEDE…FDNF), 1547–1621 (SVNQ…LALT), and 1758–1790 (NRGDYKFVQEQIQELRAEHANKTRAISFYNKKV).

It localises to the cell projection. The protein localises to the attachment organelle membrane. Component of the cytoskeleton-like structure which stabilizes the shape of the wall-less Mycoplasma. This cytoskeleton-like network of accessory proteins containing HMW proteins 1 to 5 allows the proper anchoring of cytadhesin proteins in the mycoplasmal membrane at the attachment organelle. The protein is Cytadherence high molecular weight protein 1 (hlp1) of Mycoplasmoides gallisepticum (strain R(low / passage 15 / clone 2)) (Mycoplasma gallisepticum).